Consider the following 244-residue polypeptide: Mast cell protease 2 (244 aa).

Residues 1–18 (MQALLFLMALLLPSGAGA) form the signal peptide. Residues 19–20 (EE) constitute a propeptide, activation peptide. The Peptidase S1 domain maps to 21–242 (IIGGVEAKPH…YLPWIYKVLK (222 aa)). A glycan (N-linked (GlcNAc...) asparagine) is linked at N44. The cysteines at positions 50 and 66 are disulfide-linked. Catalysis depends on charge relay system residues H65 and D109. 2 disulfides stabilise this stretch: C143/C208 and C174/C187. The active-site Charge relay system is S202.

This sequence belongs to the peptidase S1 family. Granzyme subfamily. Mucosal mast cells.

In Mus musculus (Mouse), this protein is Mast cell protease 2 (Mcpt2).